The chain runs to 238 residues: Probable transcriptional regulatory protein Mmwyl1_2868 (238 aa).

It belongs to the TACO1 family.

The protein localises to the cytoplasm. This Marinomonas sp. (strain MWYL1) protein is Probable transcriptional regulatory protein Mmwyl1_2868.